Here is a 474-residue protein sequence, read N- to C-terminus: 3-isopropylmalate dehydratase large subunit (474 aa).

Positions 353, 414, and 417 each coordinate [4Fe-4S] cluster.

Belongs to the aconitase/IPM isomerase family. LeuC type 1 subfamily. As to quaternary structure, heterodimer of LeuC and LeuD. It depends on [4Fe-4S] cluster as a cofactor.

It carries out the reaction (2R,3S)-3-isopropylmalate = (2S)-2-isopropylmalate. It functions in the pathway amino-acid biosynthesis; L-leucine biosynthesis; L-leucine from 3-methyl-2-oxobutanoate: step 2/4. Catalyzes the isomerization between 2-isopropylmalate and 3-isopropylmalate, via the formation of 2-isopropylmaleate. This Teredinibacter turnerae (strain ATCC 39867 / T7901) protein is 3-isopropylmalate dehydratase large subunit.